Reading from the N-terminus, the 407-residue chain is Peptidase T (407 aa).

Zn(2+) is bound at residue His82. Residue Asp84 is part of the active site. Asp143 lines the Zn(2+) pocket. Glu177 functions as the Proton acceptor in the catalytic mechanism. The Zn(2+) site is built by Glu178, Asp200, and His382.

This sequence belongs to the peptidase M20B family. Zn(2+) serves as cofactor.

Its subcellular location is the cytoplasm. The catalysed reaction is Release of the N-terminal residue from a tripeptide.. In terms of biological role, cleaves the N-terminal amino acid of tripeptides. The chain is Peptidase T from Streptococcus pyogenes serotype M49 (strain NZ131).